The following is a 370-amino-acid chain: D-alanine--D-alanine ligase (370 aa).

The ATP-grasp domain maps to 144 to 352 (KKIFADAGIP…YGALIERLVD (209 aa)). 177-232 (EEVLTYPVFVKPANLGSSVGISKATNKKELADAMTEAFLYDRRVVVEQGVVAREIE) serves as a coordination point for ATP. Mg(2+) is bound by residues D306, E319, and N321.

It belongs to the D-alanine--D-alanine ligase family. The cofactor is Mg(2+). Requires Mn(2+) as cofactor.

The protein resides in the cytoplasm. It catalyses the reaction 2 D-alanine + ATP = D-alanyl-D-alanine + ADP + phosphate + H(+). It participates in cell wall biogenesis; peptidoglycan biosynthesis. In terms of biological role, cell wall formation. The polypeptide is D-alanine--D-alanine ligase (Listeria monocytogenes serotype 4b (strain F2365)).